A 188-amino-acid chain; its full sequence is Ribosomal RNA small subunit methyltransferase G (188 aa).

S-adenosyl-L-methionine-binding positions include Gly-69, Phe-74, 119–120 (VQ), and Arg-134.

This sequence belongs to the methyltransferase superfamily. RNA methyltransferase RsmG family.

The protein localises to the cytoplasm. The enzyme catalyses guanosine(527) in 16S rRNA + S-adenosyl-L-methionine = N(7)-methylguanosine(527) in 16S rRNA + S-adenosyl-L-homocysteine. In terms of biological role, specifically methylates the N7 position of guanine in position 527 of 16S rRNA. This Campylobacter jejuni subsp. doylei (strain ATCC BAA-1458 / RM4099 / 269.97) protein is Ribosomal RNA small subunit methyltransferase G.